A 257-amino-acid chain; its full sequence is NH(3)-dependent NAD(+) synthetase (257 aa).

28-35 provides a ligand contact to ATP; sequence GISGGVDS. Mg(2+) is bound at residue Asp-34. Arg-109 contributes to the deamido-NAD(+) binding site. Thr-129 lines the ATP pocket. Glu-134 contacts Mg(2+). Lys-142 and Asp-149 together coordinate deamido-NAD(+). Positions 158 and 180 each coordinate ATP. Residue 240 to 241 coordinates deamido-NAD(+); that stretch reads HK.

The protein belongs to the NAD synthetase family. In terms of assembly, homodimer.

It carries out the reaction deamido-NAD(+) + NH4(+) + ATP = AMP + diphosphate + NAD(+) + H(+). It participates in cofactor biosynthesis; NAD(+) biosynthesis; NAD(+) from deamido-NAD(+) (ammonia route): step 1/1. Its function is as follows. Catalyzes the ATP-dependent amidation of deamido-NAD to form NAD. Uses ammonia as a nitrogen source. The polypeptide is NH(3)-dependent NAD(+) synthetase (Pyrococcus furiosus (strain ATCC 43587 / DSM 3638 / JCM 8422 / Vc1)).